Reading from the N-terminus, the 482-residue chain is Protein nucleotidyltransferase YdiU (482 aa).

Gly-88, Gly-90, Arg-91, Lys-111, Asp-123, Gly-124, Arg-174, and Arg-181 together coordinate ATP. Asp-250 serves as the catalytic Proton acceptor. Mg(2+) contacts are provided by Asn-251 and Asp-260. Asp-260 serves as a coordination point for ATP.

It belongs to the SELO family. Mg(2+) serves as cofactor. Mn(2+) is required as a cofactor.

The catalysed reaction is L-seryl-[protein] + ATP = 3-O-(5'-adenylyl)-L-seryl-[protein] + diphosphate. It catalyses the reaction L-threonyl-[protein] + ATP = 3-O-(5'-adenylyl)-L-threonyl-[protein] + diphosphate. It carries out the reaction L-tyrosyl-[protein] + ATP = O-(5'-adenylyl)-L-tyrosyl-[protein] + diphosphate. The enzyme catalyses L-histidyl-[protein] + UTP = N(tele)-(5'-uridylyl)-L-histidyl-[protein] + diphosphate. The catalysed reaction is L-seryl-[protein] + UTP = O-(5'-uridylyl)-L-seryl-[protein] + diphosphate. It catalyses the reaction L-tyrosyl-[protein] + UTP = O-(5'-uridylyl)-L-tyrosyl-[protein] + diphosphate. Nucleotidyltransferase involved in the post-translational modification of proteins. It can catalyze the addition of adenosine monophosphate (AMP) or uridine monophosphate (UMP) to a protein, resulting in modifications known as AMPylation and UMPylation. This Cronobacter sakazakii (strain ATCC BAA-894) (Enterobacter sakazakii) protein is Protein nucleotidyltransferase YdiU.